A 235-amino-acid chain; its full sequence is Thaumatin I (235 aa).

The signal sequence occupies residues 1-22; the sequence is MAATTCFFFLFPFLLLLTLSRA. Disulfide bonds link cysteine 31–cysteine 226, cysteine 78–cysteine 88, cysteine 93–cysteine 99, cysteine 143–cysteine 215, cysteine 148–cysteine 199, cysteine 156–cysteine 167, cysteine 171–cysteine 180, and cysteine 181–cysteine 186. A propeptide spans 230–235 (removed in mature form); the sequence is LELEDE.

The protein belongs to the thaumatin family.

It localises to the cytoplasmic vesicle. Functionally, taste-modifying protein; intensely sweet-tasting. It is 100000 times sweeter than sucrose on a molar basis. In Thaumatococcus daniellii (Katemfe), this protein is Thaumatin I.